Consider the following 366-residue polypeptide: Aminomethyltransferase (366 aa).

Belongs to the GcvT family. As to quaternary structure, the glycine cleavage system is composed of four proteins: P, T, L and H.

The enzyme catalyses N(6)-[(R)-S(8)-aminomethyldihydrolipoyl]-L-lysyl-[protein] + (6S)-5,6,7,8-tetrahydrofolate = N(6)-[(R)-dihydrolipoyl]-L-lysyl-[protein] + (6R)-5,10-methylene-5,6,7,8-tetrahydrofolate + NH4(+). In terms of biological role, the glycine cleavage system catalyzes the degradation of glycine. The sequence is that of Aminomethyltransferase from Bordetella parapertussis (strain 12822 / ATCC BAA-587 / NCTC 13253).